The following is a 126-amino-acid chain: uncharacterized protein (126 aa).

This is an uncharacterized protein from Bacillus subtilis (strain 168).